Here is a 344-residue protein sequence, read N- to C-terminus: 3,4-dihydroxy-2-butanone 4-phosphate synthase (344 aa).

Positions 1 to 202 are DHBP synthase; that stretch reads MILRRVTEAL…VSDLISYRLE (202 aa). Residues 27-28, aspartate 32, 139-143, and glutamate 163 each bind D-ribulose 5-phosphate; these read RE and RTGHT. Glutamate 28 lines the Mg(2+) pocket. Position 142 (histidine 142) interacts with Mg(2+). The segment at 203–344 is GTP cyclohydrolase II-like; it reads NESLLKMFCQ…GLKLVETISL (142 aa).

It in the N-terminal section; belongs to the DHBP synthase family. In the C-terminal section; belongs to the GTP cyclohydrolase II family. Mg(2+) is required as a cofactor. It depends on Mn(2+) as a cofactor.

It catalyses the reaction D-ribulose 5-phosphate = (2S)-2-hydroxy-3-oxobutyl phosphate + formate + H(+). Its pathway is cofactor biosynthesis; riboflavin biosynthesis; 2-hydroxy-3-oxobutyl phosphate from D-ribulose 5-phosphate: step 1/1. Functionally, catalyzes the conversion of D-ribulose 5-phosphate to formate and 3,4-dihydroxy-2-butanone 4-phosphate. This Helicobacter pylori (strain J99 / ATCC 700824) (Campylobacter pylori J99) protein is 3,4-dihydroxy-2-butanone 4-phosphate synthase (ribB).